A 166-amino-acid chain; its full sequence is Small ribosomal subunit protein uS9 (166 aa).

The tract at residues 135–166 (KKAGFLTRDPRATERKKYGLKKARKAPQYSKR) is disordered. Basic and acidic residues predominate over residues 142-151 (RDPRATERKK). The segment covering 152–166 (YGLKKARKAPQYSKR) has biased composition (basic residues).

Belongs to the universal ribosomal protein uS9 family.

The polypeptide is Small ribosomal subunit protein uS9 (Mycobacterium avium (strain 104)).